A 467-amino-acid chain; its full sequence is Membrane-bound lytic murein transglycosylase F (467 aa).

A signal peptide spans 1–33 (MTELFRHSKHLLASLALLSVLGLMLAMHPSPSA). The interval 34-266 (IERIMARGEL…KLEDRFYGHV (233 aa)) is non-LT domain. The interval 268–467 (QFNLYAARSF…RRDDTLIALN (200 aa)) is LT domain. Residue glutamate 313 is part of the active site.

In the N-terminal section; belongs to the bacterial solute-binding protein 3 family. The protein in the C-terminal section; belongs to the transglycosylase Slt family.

The protein localises to the cell outer membrane. The enzyme catalyses Exolytic cleavage of the (1-&gt;4)-beta-glycosidic linkage between N-acetylmuramic acid (MurNAc) and N-acetylglucosamine (GlcNAc) residues in peptidoglycan, from either the reducing or the non-reducing ends of the peptidoglycan chains, with concomitant formation of a 1,6-anhydrobond in the MurNAc residue.. In terms of biological role, murein-degrading enzyme that degrades murein glycan strands and insoluble, high-molecular weight murein sacculi, with the concomitant formation of a 1,6-anhydromuramoyl product. Lytic transglycosylases (LTs) play an integral role in the metabolism of the peptidoglycan (PG) sacculus. Their lytic action creates space within the PG sacculus to allow for its expansion as well as for the insertion of various structures such as secretion systems and flagella. In Alcanivorax borkumensis (strain ATCC 700651 / DSM 11573 / NCIMB 13689 / SK2), this protein is Membrane-bound lytic murein transglycosylase F.